Consider the following 431-residue polypeptide: UDP-N-acetylmuramate--L-alanine ligase (431 aa).

108–114 (GSHGKTS) contacts ATP.

The protein belongs to the MurCDEF family.

The protein resides in the cytoplasm. The catalysed reaction is UDP-N-acetyl-alpha-D-muramate + L-alanine + ATP = UDP-N-acetyl-alpha-D-muramoyl-L-alanine + ADP + phosphate + H(+). Its pathway is cell wall biogenesis; peptidoglycan biosynthesis. Cell wall formation. The sequence is that of UDP-N-acetylmuramate--L-alanine ligase from Exiguobacterium sibiricum (strain DSM 17290 / CCUG 55495 / CIP 109462 / JCM 13490 / 255-15).